Here is a 233-residue protein sequence, read N- to C-terminus: Phosphatidylserine decarboxylase proenzyme (233 aa).

Ser-190 acts as the Schiff-base intermediate with substrate; via pyruvic acid in catalysis. The residue at position 190 (Ser-190) is a Pyruvic acid (Ser); by autocatalysis.

The protein belongs to the phosphatidylserine decarboxylase family. PSD-A subfamily. In terms of assembly, heterodimer of a large membrane-associated beta subunit and a small pyruvoyl-containing alpha subunit. The cofactor is pyruvate. In terms of processing, is synthesized initially as an inactive proenzyme. Formation of the active enzyme involves a self-maturation process in which the active site pyruvoyl group is generated from an internal serine residue via an autocatalytic post-translational modification. Two non-identical subunits are generated from the proenzyme in this reaction, and the pyruvate is formed at the N-terminus of the alpha chain, which is derived from the carboxyl end of the proenzyme. The post-translation cleavage follows an unusual pathway, termed non-hydrolytic serinolysis, in which the side chain hydroxyl group of the serine supplies its oxygen atom to form the C-terminus of the beta chain, while the remainder of the serine residue undergoes an oxidative deamination to produce ammonia and the pyruvoyl prosthetic group on the alpha chain.

Its subcellular location is the cell membrane. The catalysed reaction is a 1,2-diacyl-sn-glycero-3-phospho-L-serine + H(+) = a 1,2-diacyl-sn-glycero-3-phosphoethanolamine + CO2. Its pathway is phospholipid metabolism; phosphatidylethanolamine biosynthesis; phosphatidylethanolamine from CDP-diacylglycerol: step 2/2. Its function is as follows. Catalyzes the formation of phosphatidylethanolamine (PtdEtn) from phosphatidylserine (PtdSer). This Bartonella quintana (strain Toulouse) (Rochalimaea quintana) protein is Phosphatidylserine decarboxylase proenzyme.